The chain runs to 79 residues: Large ribosomal subunit protein bL31 (79 aa).

It belongs to the bacterial ribosomal protein bL31 family. Type A subfamily. In terms of assembly, part of the 50S ribosomal subunit.

Binds the 23S rRNA. The protein is Large ribosomal subunit protein bL31 of Synechococcus sp. (strain CC9902).